We begin with the raw amino-acid sequence, 364 residues long: Aminomethyltransferase (364 aa).

The protein belongs to the GcvT family. The glycine cleavage system is composed of four proteins: P, T, L and H.

The enzyme catalyses N(6)-[(R)-S(8)-aminomethyldihydrolipoyl]-L-lysyl-[protein] + (6S)-5,6,7,8-tetrahydrofolate = N(6)-[(R)-dihydrolipoyl]-L-lysyl-[protein] + (6R)-5,10-methylene-5,6,7,8-tetrahydrofolate + NH4(+). The glycine cleavage system catalyzes the degradation of glycine. This is Aminomethyltransferase from Salmonella enteritidis PT4 (strain P125109).